Here is a 372-residue protein sequence, read N- to C-terminus: Aminomethyltransferase (372 aa).

The protein belongs to the GcvT family. The glycine cleavage system is composed of four proteins: P, T, L and H.

The catalysed reaction is N(6)-[(R)-S(8)-aminomethyldihydrolipoyl]-L-lysyl-[protein] + (6S)-5,6,7,8-tetrahydrofolate = N(6)-[(R)-dihydrolipoyl]-L-lysyl-[protein] + (6R)-5,10-methylene-5,6,7,8-tetrahydrofolate + NH4(+). The glycine cleavage system catalyzes the degradation of glycine. The protein is Aminomethyltransferase of Burkholderia cenocepacia (strain ATCC BAA-245 / DSM 16553 / LMG 16656 / NCTC 13227 / J2315 / CF5610) (Burkholderia cepacia (strain J2315)).